Consider the following 591-residue polypeptide: MVTEAFEFVAVPFNSDGWGPPDASDVSSSASPTSVAAANLLPNVPFASFSRSDKLGRVADWTRNLSNPSARPNTGSKSDPSAVFDFSAFAIDEGFGLASSGGNPDEDAAFRLVDGKPPPRPKFGPKWRFNPHHNRNQLPQRRDEEVEAKKRDAEKERARRDRLYNNNRNNIHHQRREAAAFKSSVDIQPEWNMLEQIPFSTFSKLSYTVQEPEDLLLCGGLEYYNRLFDRITPKNERRLERFKNRNFFKVTTSDDPVIRRLAKEDKATVFATDAILAALMCAPRSVYSWDIVIQRVGNKLFFDKRDGSQLDLLSVHETSQEPLPESKDDINSAHSLGVEAAYINQNFSQQVLVRDGKKETFDEANPFANEGEEIASVAYRYRRWKLDDNMHLVARCELQSVADLNNQRSFLTLNALNEFDPKYSGVDWRQKLETQRGAVLATELKNNGNKLAKWTAQALLANADMMKIGFVSRVHPRDHFNHVILSVLGYKPKDFAGQINLNTSNMWGIVKSIVDLCMKLSEGKYVLVKDPSKPQVRIYEVPPDAFENDYVEEPLPEDEQVQPTEENTEGAEASVAATKETEEKKADDAQA.

The segment at 100–159 (SGGNPDEDAAFRLVDGKPPPRPKFGPKWRFNPHHNRNQLPQRRDEEVEAKKRDAEKERAR) is disordered. The span at 123-135 (FGPKWRFNPHHNR) shows a compositional bias: basic residues. Basic and acidic residues predominate over residues 140 to 159 (QRRDEEVEAKKRDAEKERAR). The tract at residues 309 to 323 (QLDLLSVHETSQEPL) is RNA gate. The segment covering 549-560 (DYVEEPLPEDEQ) has biased composition (acidic residues). The segment at 549 to 591 (DYVEEPLPEDEQVQPTEENTEGAEASVAATKETEEKKADDAQA) is disordered. Over residues 579 to 591 (KETEEKKADDAQA) the composition is skewed to basic and acidic residues.

This sequence belongs to the eIF-3 subunit D family. As to quaternary structure, component of the eukaryotic translation initiation factor 3 (eIF-3) complex, which is composed of at least 13 different subunits.

It is found in the cytoplasm. In terms of biological role, mRNA cap-binding component of the eukaryotic translation initiation factor 3 (eIF-3) complex, which is involved in protein synthesis of a specialized repertoire of mRNAs and, together with other initiation factors, stimulates binding of mRNA and methionyl-tRNAi to the 40S ribosome. The eIF-3 complex specifically targets and initiates translation of a subset of mRNAs involved in cell proliferation. In the eIF-3 complex, eif3d specifically recognizes and binds the 7-methylguanosine cap of a subset of mRNAs. This Arabidopsis thaliana (Mouse-ear cress) protein is Eukaryotic translation initiation factor 3 subunit D (TIF3D1).